Consider the following 205-residue polypeptide: Small ribosomal subunit protein bS16 (205 aa).

Residues 110 to 205 (GEEVKIAVGT…ADDNEEPEDE (96 aa)) are disordered. Residues 123 to 132 (DPLERERERA) show a composition bias toward basic and acidic residues. Positions 153–205 (EETEAEEAEDVETADAEDADAASETDEPEAAADEADETDASADADDNEEPEDE) are enriched in acidic residues.

This sequence belongs to the bacterial ribosomal protein bS16 family.

The chain is Small ribosomal subunit protein bS16 from Salinibacter ruber (strain DSM 13855 / M31).